Here is a 540-residue protein sequence, read N- to C-terminus: Cytochrome bc1 complex cytochrome b subunit (540 aa).

The helical transmembrane segment at 40-60 (EIALYSFIILLLTGVYLTLFF) threads the bilayer. Residues His-105 and His-119 each contribute to the heme site. 3 helical membrane-spanning segments follow: residues 109–129 (ALTF…TGAF), 137–157 (WIIG…GYSL), and 169–189 (IMSA…WLIF). Heme is bound by residues His-206 and His-221. The next 5 membrane-spanning stretches (helical) occupy residues 207 to 227 (VLII…LVWY), 259 to 279 (FGLV…INAI), 325 to 345 (AFWV…YPFI), 371 to 391 (LGVM…NDLF), and 408 to 428 (IGLI…CLGL).

This sequence belongs to the cytochrome b family. As to quaternary structure, the cytochrome bc1 complex is composed of a cytochrome b (QcrB), the Rieske protein iron-sulfur (QcrA) and a diheme cytochrome c (QcrC) subunit. Requires heme as cofactor.

The protein localises to the cell membrane. It catalyses the reaction a quinol + 2 Fe(III)-[cytochrome c](out) = a quinone + 2 Fe(II)-[cytochrome c](out) + 2 H(+)(out). Its function is as follows. Cytochrome b subunit of the cytochrome bc1 complex, an essential component of the respiratory electron transport chain required for ATP synthesis. The bc1 complex catalyzes the oxidation of menaquinol and the reduction of cytochrome c in the respiratory chain. The bc1 complex operates through a Q-cycle mechanism that couples electron transfer to generation of the proton gradient that drives ATP synthesis. The chain is Cytochrome bc1 complex cytochrome b subunit (qcrB) from Corynebacterium diphtheriae (strain ATCC 700971 / NCTC 13129 / Biotype gravis).